We begin with the raw amino-acid sequence, 119 residues long: NADH-quinone oxidoreductase subunit A (119 aa).

Helical transmembrane passes span 7-27 (YPVL…VSIG), 63-83 (LVAI…PWGV), and 88-108 (IGWP…LGFA).

This sequence belongs to the complex I subunit 3 family. In terms of assembly, NDH-1 is composed of 14 different subunits. Subunits NuoA, H, J, K, L, M, N constitute the membrane sector of the complex.

The protein resides in the cell inner membrane. The enzyme catalyses a quinone + NADH + 5 H(+)(in) = a quinol + NAD(+) + 4 H(+)(out). Functionally, NDH-1 shuttles electrons from NADH, via FMN and iron-sulfur (Fe-S) centers, to quinones in the respiratory chain. The immediate electron acceptor for the enzyme in this species is believed to be ubiquinone. Couples the redox reaction to proton translocation (for every two electrons transferred, four hydrogen ions are translocated across the cytoplasmic membrane), and thus conserves the redox energy in a proton gradient. The sequence is that of NADH-quinone oxidoreductase subunit A from Burkholderia ambifaria (strain MC40-6).